The following is a 272-amino-acid chain: MEGGGGGGGGGGGGGGGGGGGGAPYATRTAEEVFRDLRGRRAGMIKALTTDVEKFYKLCDPEKENLCLYGYPNETWEVTLPAEEVPPEIPEPALGINFARDGMNEKDWLALVAVHSDSWLLSVAFYFGARFGFDREARRRLFNMINNLPTIFEVVTGAAKKQAKEKTPNSSSKSNKPSSKVQSKAESRSKSKLSAPKDEEGSGDDEGEEEEDDHDNTLCGTCGTNDGKDEFWICCDNCEKWYHGKCVKITPARAEHIKQYKCPDCTNKRARA.

Residues 1–23 (MEGGGGGGGGGGGGGGGGGGGGA) are compositionally biased toward gly residues. Disordered regions lie at residues 1–24 (MEGG…GGAP) and 162–218 (QAKE…DNTL). Low complexity predominate over residues 168 to 182 (PNSSSKSNKPSSKVQ). Positions 183-200 (SKAESRSKSKLSAPKDEE) are enriched in basic and acidic residues. The segment covering 201–214 (GSGDDEGEEEEDDH) has biased composition (acidic residues). The PHD-type zinc-finger motif lies at 216–268 (NTLCGTCGTNDGKDEFWICCDNCEKWYHGKCVKITPARAEHIKQYKCPDCTNK).

The protein belongs to the Alfin family.

It localises to the nucleus. Its function is as follows. Histone-binding component that specifically recognizes H3 tails trimethylated on 'Lys-4' (H3K4me3), which mark transcription start sites of virtually all active genes. This is PHD finger protein ALFIN-LIKE 6 from Oryza sativa subsp. japonica (Rice).